The chain runs to 122 residues: MIQQESRMKVADNSGAREVLTIKVLGGSGRKTANIGDVVVCTVKQATPGGVVKKGEVVKAVIVRTKSGARRQDGSYIKFDENACVIIRDDKSPRGTRIFGPVARELRENNFMKIVSLAPEVL.

It belongs to the universal ribosomal protein uL14 family. As to quaternary structure, part of the 50S ribosomal subunit. Forms a cluster with proteins L3 and L19. In the 70S ribosome, L14 and L19 interact and together make contacts with the 16S rRNA in bridges B5 and B8.

Functionally, binds to 23S rRNA. Forms part of two intersubunit bridges in the 70S ribosome. The polypeptide is Large ribosomal subunit protein uL14 (Listeria monocytogenes serotype 4b (strain CLIP80459)).